Reading from the N-terminus, the 288-residue chain is ATP synthase gamma chain (288 aa).

This sequence belongs to the ATPase gamma chain family. In terms of assembly, F-type ATPases have 2 components, CF(1) - the catalytic core - and CF(0) - the membrane proton channel. CF(1) has five subunits: alpha(3), beta(3), gamma(1), delta(1), epsilon(1). CF(0) has three main subunits: a, b and c.

The protein resides in the cell membrane. Functionally, produces ATP from ADP in the presence of a proton gradient across the membrane. The gamma chain is believed to be important in regulating ATPase activity and the flow of protons through the CF(0) complex. The chain is ATP synthase gamma chain from Macrococcus caseolyticus (strain JCSC5402) (Macrococcoides caseolyticum).